The chain runs to 618 residues: Structural protein ORF618 (618 aa).

A coiled-coil region spans residues 570–598; the sequence is ILEAKRQIEDRAKGLSKNLDNTVTEIMNA.

The protein resides in the virion. This chain is Structural protein ORF618, found in Acidianus two-tailed virus (ATV).